The following is a 532-amino-acid chain: Hepatocyte nuclear factor 1-beta-B (532 aa).

Residues 1–35 (MFTDMVSKLTSLQQELLSALLDSGVTKDVLVQALE) are dimerization. Residues 5-36 (MVSKLTSLQQELLSALLDSGVTKDVLVQALED) form the HNF-p1 domain. Residues 74–95 (TGAQGKGGKLSGDEGSEDGDDF) are disordered. Residues 102-197 (RELQSLNTEE…IDRQFDRVQG (96 aa)) form the POU-specific atypical domain. The segment covering 222-231 (SSGAAGGSGA) has biased composition (gly residues). Disordered regions lie at residues 222–245 (SSGAAGGSGAAVGDEGEPGSKRMR) and 500–532 (EAGQFSHPSRYSTMDSSTITHLGSSKQCPLQAW). The segment at residues 244–324 (MRRNRFKWGP…NRRKEEAFRQ (81 aa)) is a DNA-binding region (homeobox; HNF1-type). Over residues 505–532 (SHPSRYSTMDSSTITHLGSSKQCPLQAW) the composition is skewed to polar residues.

It belongs to the HNF1 homeobox family. As to quaternary structure, binds DNA as a dimer. Can form homodimer or heterodimer with HNF1-alpha. First expressed at stage 10 in the intermediate mesoderm. Expressed in rhombomere r5 by 14 hpf with expression diminishing by 18 hpf.

The protein resides in the nucleus. In terms of biological role, transcription factor that binds to the inverted palindrome 5'-GTTAATNATTAAC-3'. Acts downstream of hnf1ba but is not required for induction of rhombomere r5/r6 gene expression in the hindbrain. This chain is Hepatocyte nuclear factor 1-beta-B, found in Danio rerio (Zebrafish).